A 245-amino-acid chain; its full sequence is UDP-2,3-diacylglucosamine hydrolase (245 aa).

Mn(2+) is bound by residues Asp8, His10, Asp41, Asn79, and His114. 79–80 (NR) is a binding site for substrate. Substrate contacts are provided by Asp122, Ser160, Asn164, Lys167, and His195. Mn(2+) is bound by residues His195 and His197.

It belongs to the LpxH family. Requires Mn(2+) as cofactor.

It localises to the cell inner membrane. The enzyme catalyses UDP-2-N,3-O-bis[(3R)-3-hydroxytetradecanoyl]-alpha-D-glucosamine + H2O = 2-N,3-O-bis[(3R)-3-hydroxytetradecanoyl]-alpha-D-glucosaminyl 1-phosphate + UMP + 2 H(+). Its pathway is glycolipid biosynthesis; lipid IV(A) biosynthesis; lipid IV(A) from (3R)-3-hydroxytetradecanoyl-[acyl-carrier-protein] and UDP-N-acetyl-alpha-D-glucosamine: step 4/6. Functionally, hydrolyzes the pyrophosphate bond of UDP-2,3-diacylglucosamine to yield 2,3-diacylglucosamine 1-phosphate (lipid X) and UMP by catalyzing the attack of water at the alpha-P atom. Involved in the biosynthesis of lipid A, a phosphorylated glycolipid that anchors the lipopolysaccharide to the outer membrane of the cell. The protein is UDP-2,3-diacylglucosamine hydrolase of Photobacterium profundum (strain SS9).